The primary structure comprises 251 residues: 5-oxoprolinase subunit A (251 aa).

It belongs to the LamB/PxpA family. As to quaternary structure, forms a complex composed of PxpA, PxpB and PxpC.

The enzyme catalyses 5-oxo-L-proline + ATP + 2 H2O = L-glutamate + ADP + phosphate + H(+). Catalyzes the cleavage of 5-oxoproline to form L-glutamate coupled to the hydrolysis of ATP to ADP and inorganic phosphate. This is 5-oxoprolinase subunit A from Paracidovorax citrulli (strain AAC00-1) (Acidovorax citrulli).